Consider the following 456-residue polypeptide: Anthocyanidin 3-O-galactosyltransferase F3GT1 (456 aa).

Positions 20, 22, and 83 each coordinate an anthocyanidin. His-22 functions as the Proton acceptor in the catalytic mechanism. The Charge relay role is filled by Asp-118. His-150 serves as a coordination point for an anthocyanidin. Positions 281, 333, 334, 351, 355, 356, and 359 each coordinate UDP. Gly-374 serves as a coordination point for an anthocyanidin.

Belongs to the UDP-glycosyltransferase family. As to expression, expressed at low levels in stems and leaves. Expressed in ovaries.

The enzyme catalyses cyanidin + UDP-alpha-D-galactose = cyanidin 3-O-beta-D-galactoside + UDP + H(+). The protein operates within pigment biosynthesis; anthocyanin biosynthesis. Its function is as follows. Involved in anthocyanin biosynthesis by catalyzing the galactosylation of cyanidin. Required for the accumulation of anthocyanin in red-fleshed kiwifruit varieties. Seems to be the key enzyme regulating the accumulation of anthocyanin in red-fleshed kiwi fruits. This is Anthocyanidin 3-O-galactosyltransferase F3GT1 from Actinidia chinensis var. chinensis (Chinese soft-hair kiwi).